The chain runs to 651 residues: Acid beta-fructofuranosidase (651 aa).

Residues 1-23 (MEHHKPLLPTSSHAAPNPRTRKD) are Cytoplasmic-facing. Positions 1-103 (MEHHKPLLPT…LFSGEGGASE (103 aa)) are cleaved as a propeptide — removed in mature form. Residues 24–44 (LLLLLCALLFLSSLVAFGRNR) traverse the membrane as a helical; Signal-anchor for type II membrane protein segment. At 45 to 651 (ASNVPHDHVS…PFPFNPDQKN (607 aa)) the chain is on the lumenal side. Residues 48–76 (VPHDHVSSSASNHQQEHQSPTSLPSSKWH) form a disordered region. Positions 54–72 (SSSASNHQQEHQSPTSLPS) are enriched in polar residues. Residues 127–130 (WMND), Q146, W154, and 189–190 (WT) contribute to the substrate site. D130 is a catalytic residue. A glycan (N-linked (GlcNAc...) asparagine) is linked at N210. Residue 253–254 (RD) participates in substrate binding. A glycan (N-linked (GlcNAc...) asparagine) is linked at N275. 2 residues coordinate substrate: E308 and D343. Residues C500 and C548 are joined by a disulfide bond. A glycan (N-linked (GlcNAc...) asparagine) is linked at N620.

The protein belongs to the glycosyl hydrolase 32 family. In terms of assembly, may be present in two forms, a 70 kDa monomer and a heterodimer of the 30 kDa and 38 kDa subunits. The ratio of the levels of the two forms within cells appears to be regulated developmentally.

It localises to the membrane. The protein localises to the vacuole lumen. It catalyses the reaction Hydrolysis of terminal non-reducing beta-D-fructofuranoside residues in beta-D-fructofuranosides.. It participates in glycan biosynthesis; sucrose metabolism. This chain is Acid beta-fructofuranosidase, found in Phaseolus vulgaris (Kidney bean).